We begin with the raw amino-acid sequence, 888 residues long: Potassium channel AKT6 (888 aa).

The Cytoplasmic segment spans residues 1 to 84; that stretch reads MEKKKVWFWG…PFDPRYRAWE (84 aa). The tract at residues 10-31 is disordered; that stretch reads GVKDDGEGGGGRGGGRTKDAED. A helical membrane pass occupies residues 85-105; sequence TFLVFLVLYTAWASPFEFGFL. Residues 106-113 lie on the Extracellular side of the membrane; it reads QKPRPPLS. The chain crosses the membrane as a helical span at residues 114 to 134; it reads ILDNIVNGFFAVDIVLTFFVA. Over 135–155 the chain is Cytoplasmic; it reads FLDKVTYLLVDDPKRIAWRYA. The helical transmembrane segment at 156-176 threads the bilayer; that stretch reads STWLIFDVVSTFPYEIFGSLL. The Extracellular segment spans residues 177 to 184; sequence HESIQGYG. The chain crosses the membrane as a helical; Voltage-sensor span at residues 185–205; sequence IFSMLRLWRLRRVSNCFARLE. Residues 206–219 lie on the Cytoplasmic side of the membrane; that stretch reads KDRKYSYFWVRCSK. A helical membrane pass occupies residues 220–240; that stretch reads LLLVTLFVIHCGACFLYSIAA. Residues 241–267 are Extracellular-facing; the sequence is HYPDPSKTFMALTDENWKESPIAVRYN. Residues 268–287 constitute an intramembrane region (pore-forming); that stretch reads TAMYWSITTFSTTGYGDIHG. Residues 288–291 are Extracellular-facing; the sequence is VNSR. Residues 292-312 form a helical membrane-spanning segment; the sequence is EMTFILFYMVFNLGLSAYIIG. At 313–888 the chain is on the cytoplasmic side; sequence NMTNLVVHVT…GDFLLLSRDP (576 aa). An a nucleoside 3',5'-cyclic phosphate-binding site is contributed by 398 to 519; that stretch reads LFHGISNDLL…IMNNLLQHLK (122 aa). 5 ANK repeats span residues 543-572, 576-605, 609-638, 640-669, and 673-702; these read DLPL…SPNE, DGRT…DPNI, EGNV…KLSL, SVSY…DVTL, and NGTT…DLDW. One can recognise a KHA domain in the interval 822–888; sequence RVTISSPENG…GDFLLLSRDP (67 aa).

This sequence belongs to the potassium channel family. Plant (TC 1.A.1.4) subfamily. The potassium channel is probably composed of a homo- or heterotetrameric complex of pore-forming subunits. As to expression, predominantly expressed in flowers; especially in pollen.

The protein resides in the membrane. Its function is as follows. Highly selective inward-rectifying potassium channel that could mediate potassium uptake in the pollen membrane. Plays an important role in pollen tube development. Assuming opened or closed conformations in response to the voltage difference across the membrane, the channel is activated by hyperpolarization. May interact with the cytoskeleton or with regulatory proteins. This chain is Potassium channel AKT6 (AKT6), found in Arabidopsis thaliana (Mouse-ear cress).